A 562-amino-acid chain; its full sequence is 3-hydroxy-3-methylglutaryl-coenzyme A reductase 2 (562 aa).

2 helical membrane-spanning segments follow: residues 32 to 56 and 77 to 100; these read ALPL…YFLL and ICAL…DLIF. Residues 101 to 146 are linker; the sequence is RSSSDDDVWVNDGMIPCNQSLDCREVLPIKPNSVDPPRESELDSVE. Asn-118 carries N-linked (GlcNAc...) asparagine glycosylation. The catalytic stretch occupies residues 147 to 562; that stretch reads DEEIVKLVID…DIGPSSQVNR (416 aa). Catalysis depends on Glu-240, which acts as the Charge relay system. The N-linked (GlcNAc...) asparagine glycan is linked to Asn-304. Residues Lys-372 and Asp-448 each act as charge relay system in the active site. His-544 serves as the catalytic Proton donor. Residue Asn-548 is glycosylated (N-linked (GlcNAc...) asparagine). Ser-550 is modified (phosphoserine).

This sequence belongs to the HMG-CoA reductase family. As to expression, restricted to young seedlings, roots, and inflorescences. Expressed in root tips, shoot apex, secretory zone of the stigma, microspores, mature pollen grains, gynoecium vascular tissue and fertilized ovules.

It localises to the endoplasmic reticulum membrane. It catalyses the reaction (R)-mevalonate + 2 NADP(+) + CoA = (3S)-3-hydroxy-3-methylglutaryl-CoA + 2 NADPH + 2 H(+). The protein operates within metabolic intermediate biosynthesis; (R)-mevalonate biosynthesis; (R)-mevalonate from acetyl-CoA: step 3/3. Regulated at the post-translational level in response to alterations of the sphingolipid and the sterol biosynthetic pathways. In terms of biological role, catalyzes the synthesis of mevalonate. The specific precursor of all isoprenoid compounds present in plants. The chain is 3-hydroxy-3-methylglutaryl-coenzyme A reductase 2 (HMG2) from Arabidopsis thaliana (Mouse-ear cress).